Reading from the N-terminus, the 73-residue chain is uncharacterized protein (73 aa).

N-glycosylated.

This is an uncharacterized protein from Saccharomyces cerevisiae (strain ATCC 204508 / S288c) (Baker's yeast).